Here is a 38-residue protein sequence, read N- to C-terminus: Cytochrome b6-f complex subunit 5 (38 aa).

Residues 5–25 form a helical membrane-spanning segment; the sequence is LLLGIVLGLIPITLAGLFVAA.

It belongs to the PetG family. In terms of assembly, the 4 large subunits of the cytochrome b6-f complex are cytochrome b6, subunit IV (17 kDa polypeptide, PetD), cytochrome f and the Rieske protein, while the 4 small subunits are PetG, PetL, PetM and PetN. The complex functions as a dimer.

The protein localises to the cellular thylakoid membrane. Component of the cytochrome b6-f complex, which mediates electron transfer between photosystem II (PSII) and photosystem I (PSI), cyclic electron flow around PSI, and state transitions. PetG is required for either the stability or assembly of the cytochrome b6-f complex. This is Cytochrome b6-f complex subunit 5 from Crocosphaera subtropica (strain ATCC 51142 / BH68) (Cyanothece sp. (strain ATCC 51142)).